The chain runs to 36 residues: Pancreatic polypeptide (36 aa).

Phe-36 carries the post-translational modification Phenylalanine amide.

It belongs to the NPY family.

It localises to the secreted. Hormone secreted by pancreatic cells that acts as a regulator of pancreatic and gastrointestinal functions. This chain is Pancreatic polypeptide (ppy), found in Rana temporaria (European common frog).